The sequence spans 685 residues: Translation initiation factor IF-2 (685 aa).

One can recognise a tr-type G domain in the interval 185 to 354; the sequence is KRPPVVTVMG…LLTAEMQELK (170 aa). The G1 stretch occupies residues 194 to 201; sequence GHVDHGKT. 194–201 is a GTP binding site; it reads GHVDHGKT. Positions 219 to 223 are G2; the sequence is GITQH. The G3 stretch occupies residues 240-243; sequence DTPG. GTP-binding positions include 240-244 and 294-297; these read DTPGH and NKMD. Residues 294–297 are G4; sequence NKMD. A G5 region spans residues 330–332; it reads SAH.

The protein belongs to the TRAFAC class translation factor GTPase superfamily. Classic translation factor GTPase family. IF-2 subfamily.

It is found in the cytoplasm. Its function is as follows. One of the essential components for the initiation of protein synthesis. Protects formylmethionyl-tRNA from spontaneous hydrolysis and promotes its binding to the 30S ribosomal subunits. Also involved in the hydrolysis of GTP during the formation of the 70S ribosomal complex. In Clostridium tetani (strain Massachusetts / E88), this protein is Translation initiation factor IF-2.